The primary structure comprises 250 residues: MTDRYSFSLTTFSPSGKLGQIDYALTAVKQGVTSLGIKATNGVVIATEKKSSSPLAMSETLSKVSLLTPDIGAVYSGMGPDYRVLVDKSRKVAHTSYKRIYGEYPPTKLLVSEVAKIMQEATQSGGVRPFGVSLLIAGHDEFNGFSLYQVDPSGSYFPWKATAIGKGSVAAKTFLEKRWNDELELEDAIHIALLTLKESVEGEFNGDTIELAIIGDENPDLLGYTGIPTDKGPRFRKLTSQEINDRLEAL.

A Glycyl lysine isopeptide (Lys-Gly) (interchain with G-Cter in ubiquitin) cross-link involves residue K108.

The protein belongs to the peptidase T1A family. The 26S proteasome consists of a 20S proteasome core and two 19S regulatory subunits. The 20S proteasome core is composed of 28 subunits that are arranged in four stacked rings, resulting in a barrel-shaped structure. The two end rings are each formed by seven alpha subunits, and the two central rings are each formed by seven beta subunits. The catalytic chamber with the active sites is on the inside of the barrel.

It is found in the cytoplasm. Its subcellular location is the nucleus. In terms of biological role, the proteasome degrades poly-ubiquitinated proteins in the cytoplasm and in the nucleus. It is essential for the regulated turnover of proteins and for the removal of misfolded proteins. The proteasome is a multicatalytic proteinase complex that is characterized by its ability to cleave peptides with Arg, Phe, Tyr, Leu, and Glu adjacent to the leaving group at neutral or slightly basic pH. It has an ATP-dependent proteolytic activity. This is Proteasome subunit alpha type-2 (PRE8) from Saccharomyces cerevisiae (strain ATCC 204508 / S288c) (Baker's yeast).